Reading from the N-terminus, the 216-residue chain is UPF0502 protein PFL_4004 (216 aa).

Belongs to the UPF0502 family.

In Pseudomonas fluorescens (strain ATCC BAA-477 / NRRL B-23932 / Pf-5), this protein is UPF0502 protein PFL_4004.